The chain runs to 466 residues: 3-isopropylmalate dehydratase large subunit (466 aa).

Positions 347, 407, and 410 each coordinate [4Fe-4S] cluster.

This sequence belongs to the aconitase/IPM isomerase family. LeuC type 1 subfamily. In terms of assembly, heterodimer of LeuC and LeuD. The cofactor is [4Fe-4S] cluster.

It carries out the reaction (2R,3S)-3-isopropylmalate = (2S)-2-isopropylmalate. The protein operates within amino-acid biosynthesis; L-leucine biosynthesis; L-leucine from 3-methyl-2-oxobutanoate: step 2/4. In terms of biological role, catalyzes the isomerization between 2-isopropylmalate and 3-isopropylmalate, via the formation of 2-isopropylmaleate. In Blochmanniella pennsylvanica (strain BPEN), this protein is 3-isopropylmalate dehydratase large subunit.